A 362-amino-acid chain; its full sequence is Putative lipoprotein YdaJ (362 aa).

The N-terminal stretch at 1–20 (MRHVLIAVILFFLSIGLSAG) is a signal peptide. Cys21 carries N-palmitoyl cysteine lipidation. Cys21 is lipidated: S-diacylglycerol cysteine.

The protein resides in the cell membrane. This chain is Putative lipoprotein YdaJ (ydaJ), found in Bacillus subtilis (strain 168).